We begin with the raw amino-acid sequence, 364 residues long: D-alanine--D-alanine ligase (364 aa).

The ATP-grasp domain occupies 146-352 (KLCAMNAGIA…FAELVEKLLL (207 aa)). 179-234 (TKRFDWPLFVKPASLGSSVGISKVRNAEELAAALENACGLDSKALVEAAISGREIE) contributes to the ATP binding site. Mg(2+) is bound by residues aspartate 305, glutamate 319, and asparagine 321.

Belongs to the D-alanine--D-alanine ligase family. It depends on Mg(2+) as a cofactor. Mn(2+) is required as a cofactor.

Its subcellular location is the cytoplasm. It catalyses the reaction 2 D-alanine + ATP = D-alanyl-D-alanine + ADP + phosphate + H(+). It functions in the pathway cell wall biogenesis; peptidoglycan biosynthesis. Functionally, cell wall formation. The polypeptide is D-alanine--D-alanine ligase (Chlorobaculum tepidum (strain ATCC 49652 / DSM 12025 / NBRC 103806 / TLS) (Chlorobium tepidum)).